The sequence spans 232 residues: Octanoyltransferase (232 aa).

The region spanning 43 to 231 (LPTSNYLLFV…HLTHLFEAEI (189 aa)) is the BPL/LPL catalytic domain. Residues 88–95 (RGGDITYH), 160–162 (AMG), and 173–175 (GFA) contribute to the substrate site. Catalysis depends on Cys191, which acts as the Acyl-thioester intermediate.

Belongs to the LipB family.

Its subcellular location is the cytoplasm. The enzyme catalyses octanoyl-[ACP] + L-lysyl-[protein] = N(6)-octanoyl-L-lysyl-[protein] + holo-[ACP] + H(+). Its pathway is protein modification; protein lipoylation via endogenous pathway; protein N(6)-(lipoyl)lysine from octanoyl-[acyl-carrier-protein]: step 1/2. Functionally, catalyzes the transfer of endogenously produced octanoic acid from octanoyl-acyl-carrier-protein onto the lipoyl domains of lipoate-dependent enzymes. Lipoyl-ACP can also act as a substrate although octanoyl-ACP is likely to be the physiological substrate. This is Octanoyltransferase from Flavobacterium johnsoniae (strain ATCC 17061 / DSM 2064 / JCM 8514 / BCRC 14874 / CCUG 350202 / NBRC 14942 / NCIMB 11054 / UW101) (Cytophaga johnsonae).